The sequence spans 2517 residues: MSTQRKDMWKLLYNHVNRNVSNFSGVYSVIEDILCQEPSLISCSLVRELHNKFQDTFLLWLLNKLAKCLSESPDSSECINLQRKILSSCCSNHPKLFERLVLAYVEAIEETHLQLSSLDLGQLSNERKPAITVRIFRCDVECLQEFDPHCAIEDIKVPLEQADMYAKSLLEVLQHAHHIGYATHGDIFSGSLHQALLILKECDMDTKLASLNYCHNVLRSQSASSWITNPDVGHYAQLTLEATAIMWSAVAKWLDMGCMTRQELKRLNITTKLLLEVLHMRARPAHHLGYLLLNEILSLPTAIELDDGLLETLSSYIQGQLEHSVVPLEQLVHLQQLMLSHWHCHPTHLVPILALMGLKQTEMRSGVVQVLTQSLVEILKKEEVLSKDWQKLIAILRGFKQLEKLILSQSQHKIAEHEGHIDSSVLAMLPLQCEIIKVADTNWNNLSMQLVELESKCSADRRHIHLEICSLLMQITFIRHFLKTQTQHQLLAILQRHLKLSYLCAIRLETPSSVHTQMQSFYAQQYMRLFQSEETQEIFCSNLPQLYISGFIKPEQLMKALPTINNRSGRAQVIRLLLCSQPGKLSVFKVKDRIELYCPKCRPLPKKLPGIYLGKCKQQLPCPDFSSTNLEMIANDLLFYPDFECIAQHLDLLCFEPNVILGLLRETEALQKVSVKVIGQLVSAMRVRSPEFLEQLANLVLAAIKAMLAKPLTEQNVLQQRSMLNVLTAIAHMEDNEIWLFHWFKMTFFFLVHTRSLVAQEAVLAATEMCASQGLQTIHLWNWYKRDALDLTVRLALNVYLLDGVRFTRSLRALTKMLGFTCVQEFTCKYHRLLTAMVLPHCIVNPLCKGVLVLIAKQMQKHIGTLFSISFLRIYTHVFLTEEPELANSCIELVVSCTQSSLQQLMNADVKQTVAELLIYFNRNPTFVMRSFQSLLQLSIGSLEELSSQTANAEFANFIAERFLGVITYFESCLSEPSFEKPLKEETLYSLGQIMRFVGSQHVTQFRFKIIAMLSFVHTLQEPRLQRICLKIWHIFLHVVNVQELGPSLGRIVATLQPLLADNESVKQVNDLYEFIILRNASMLGTFITDLYFLDRMENVSPSIQKCIRRHTAHLDLKGLAEEENQSPPLVDQLRFLQKHITDECLQVRVYALQHLGDLFGRRRPKLNSTILSELPLEPMLEQIVNVLMAGCQHDDSQLQMASAKCLGELGAIDASYLPSNYNFASPQHLPLNILSDDFAVLALTSLCRGYQFQQNTKHVDSFSLAIQETLAICGISPKEQKKVQLWQSLPARMRQLMEPMLHSCYTCVHRPSTCLQQPLFGSHYSHNYYEEWAFLWASRLIDYLPSSGRRHLLSSYKPCIKRDSNMLSTFYPYILLHALLECTTEQRNHIQEEFMAVLQANEESSSSVRGRQELGAIKENAFKQFESRKYAAGIKPLASTLVSDRKEDSSRVPRLAGKLCAELLDFLQRWLREWQRIHGRSTGGKPPETIDSNYRKIHEFLNLIPKLLVSRASYNCGEYARALSYLESYLEEGEDKSQRLLEQFTFLVEVYGSLRDPDSVEGAVQVRSYDMSVTQDILVNRLVERQQDMITSYEQLLSSTDQMQPDHVRAMIDAYLRDTPKTAQLIADGLWQRLSDRYSDQCFAECKSELLWRLGSYDEMEELQSNWPAQCSQGCLKLRRPLTTRIEFDSLLDGMRESVLEELRSCSAVQQHSYANAYDAVLKLHLVHELHCSQELVEKLEQDRDEDNQEKLMKNYFDDWQYRLQIVQPQVRIQESIYSFRRNILAELQRRLTDRNHLLPHLKTELARIWLNSAQINRNAGQLQRAQLYILKAAEYQPSGLFIERAKLLWQKGDQVMAMNYLEEQLSIMRSGCQGNVKQLAAEQRHLFFRGKYLQAVYSAESMHLCADAVLKYFQEAIAVHRQSESCHVQMAQFLEKILEARQGGKSEPTGEQDDMLINVMVNYAKSLRYGSEHVYQSMPRLISLWLDTTESSTNTEQVKKMNDLLTNCCTALPTAVFYTVYSQMLSRLCHPVNDVFTVLRNVIIKLVEAYPQQSLWMLLPHFKSAKAHRIKRCKLVLTDSRLQNSTFQKLLQDFNSLTERLMDLTNKEVTLDRTYKLSDLDTRLSKLCKQPEFSQILLPFEKYMQPTLPLNSDSNSSEGSHLPANQSTVNWFPYQQIYISGFQESVLILRSAAKPKKLTIRCSDGKDYDVLVKPKDDLRRDARLMEFNGLVKRYLHQDAPARQRRLHIRTYAVLPFNEECGLVEWLPNLASYRSICMNLYAQRRLVMSTRQLQSLAVPLHESIERKREVFTKQLVPAHPPVFQEWLRQRFATPHSWYEARNTYIRTVAVMSMVGYILGLGDRHGENILFAEGNGDAVHVDFNCLFNQGELLPYPEVVPFRLTHNMIVAMGPLGVEGSFRKCCEITLRLLKQESKTLMSILRPFVYDVGAQTRKGAATAKITKDVQRIADRLQGHVKRQQANSIPLSTEGQVNFLINEATKVDNLASMYIGWGAFL.

One copy of the HEAT repeat lies at E1178 to D1214. The region spanning L1509–S2066 is the FAT domain. S1569 bears the Phosphoserine mark. Position 1570 is a phosphotyrosine (Y1570). S1573 is subject to Phosphoserine. T1575 is modified (phosphothreonine). The region spanning F2184–S2508 is the PI3K/PI4K catalytic domain. A G-loop region spans residues I2190–K2196. A catalytic loop region spans residues G2360–N2368. The activation loop stretch occupies residues H2380–T2404. The FATC domain maps to I2485–L2517.

This sequence belongs to the PI3/PI4-kinase family. ATM subfamily. As to quaternary structure, interacts with mus304. Mn(2+) serves as cofactor.

The protein resides in the nucleus. It catalyses the reaction L-seryl-[protein] + ATP = O-phospho-L-seryl-[protein] + ADP + H(+). The catalysed reaction is L-threonyl-[protein] + ATP = O-phospho-L-threonyl-[protein] + ADP + H(+). Functionally, serine/threonine protein kinase which activates checkpoint signaling upon genotoxic stresses such as ionizing radiation (IR), ultraviolet light (UV), or DNA replication stalling, thereby acting as a DNA damage sensor. Recognizes the substrate consensus sequence [ST]-Q. Phosphorylates various proteins, which collectively inhibits DNA replication and mitosis and promotes DNA repair and recombination. Phosphorylates grp/CHK1. Phosphorylates 'Ser-137' of histone variant H2AX/H2AV at sites of DNA damage, thereby regulating DNA damage response mechanism. Essential for the DNA damage checkpoint in larval imaginal disks and neuroblasts and for the DNA replication checkpoint in the embryo. Also has an essential role during early nuclear divisions in embryos, where it is required to delay mitosis in response to incomplete DNA replication. Also plays an important role during meiosis, where it may monitor double-strand-break repair during meiotic crossing over, to regulate the progression of prophase I, and to enforce metaphase I delay observed at the end of oogenesis. Involved in telomere maintenance and prevention of telomere fusion; potentially functioning downstream of moi/modigliani. This Drosophila melanogaster (Fruit fly) protein is Serine/threonine-protein kinase ATR (mei-41).